Reading from the N-terminus, the 434-residue chain is uncharacterized protein (434 aa).

The first 17 residues, 1-17, serve as a signal peptide directing secretion; that stretch reads MTFLLFQLLVLLRYSIG. Transmembrane regions (helical) follow at residues 48-68, 70-90, 112-132, 141-161, 173-193, 206-226, 232-252, 271-291, 305-325, 344-364, 380-400, and 404-424; these read AAIS…FTVL, EWVY…SVTA, YRVA…FTIF, TYGT…NAVV, WITG…RLVT, YGVH…TSFV, YCGL…LSGL, EGVY…HLGY, TSSI…TILF, WVLA…YIPL, ATFL…DTIF, and FSSL…IGTI.

It localises to the membrane. This is an uncharacterized protein from Arabidopsis thaliana (Mouse-ear cress).